Reading from the N-terminus, the 498-residue chain is Putative antiporter subunit mnhD2 (498 aa).

14 consecutive transmembrane segments (helical) span residues leucine 2–phenylalanine 22, tyrosine 32–valine 52, leucine 78–phenylalanine 98, tyrosine 108–serine 128, leucine 130–leucine 150, isoleucine 161–leucine 181, isoleucine 209–leucine 229, leucine 240–phenylalanine 260, isoleucine 271–isoleucine 291, isoleucine 308–phenylalanine 328, leucine 330–isoleucine 350, phenylalanine 369–phenylalanine 389, glycine 403–phenylalanine 423, and isoleucine 451–asparagine 471.

The protein belongs to the CPA3 antiporters (TC 2.A.63) subunit D family. In terms of assembly, may form a heterooligomeric complex that consists of seven subunits: mnhA2, mnhB2, mnhC2, mnhD2, mnhE2, mnhF2 and mnhG2.

It localises to the cell membrane. The sequence is that of Putative antiporter subunit mnhD2 (mnhD2) from Staphylococcus aureus (strain JH1).